Consider the following 128-residue polypeptide: Phosphoribosyl-AMP cyclohydrolase (128 aa).

Residue D77 coordinates Mg(2+). C78 lines the Zn(2+) pocket. Mg(2+)-binding residues include D79 and D81. C94 and C101 together coordinate Zn(2+).

The protein belongs to the PRA-CH family. As to quaternary structure, homodimer. It depends on Mg(2+) as a cofactor. Requires Zn(2+) as cofactor.

Its subcellular location is the cytoplasm. It carries out the reaction 1-(5-phospho-beta-D-ribosyl)-5'-AMP + H2O = 1-(5-phospho-beta-D-ribosyl)-5-[(5-phospho-beta-D-ribosylamino)methylideneamino]imidazole-4-carboxamide. Its pathway is amino-acid biosynthesis; L-histidine biosynthesis; L-histidine from 5-phospho-alpha-D-ribose 1-diphosphate: step 3/9. Catalyzes the hydrolysis of the adenine ring of phosphoribosyl-AMP. In Granulibacter bethesdensis (strain ATCC BAA-1260 / CGDNIH1), this protein is Phosphoribosyl-AMP cyclohydrolase.